A 1166-amino-acid chain; its full sequence is Lethal(2) giant larvae protein (1166 aa).

WD repeat units lie at residues 39–72, 82–128, 131–167, 189–223, 231–263, 278–320, 328–358, 380–464, 513–595, 604–665, 709–779, 788–833, 838–928, and 942–965; these read SALA…LYAQ, ELNV…DGKL, VSSL…EPVI, SIRQ…ERAY, SVGL…GEPP, SINR…GHKV, VIDF…AYDL, TCNY…YNFK, KKIA…TGVL, TCMA…LRES, VRCL…KEIQ, GISI…LKPI, LTAN…LNAA, and CFTN…ALST. The tract at residues 867–888 is disordered; it reads HSGSPTKSVRSHGEGDGAGNVS. Disordered regions lie at residues 975-1002 and 1144-1166; these read VEVE…KDGE and HEKT…ESQF.

This sequence belongs to the WD repeat L(2)GL family. May form multimeric complexes. Interacts with mahj. Interacts with aPKC; the interaction results in phosphorylation of l(2)gl. Interacts with ball. Post-translationally, phosphorylated by aPKC which restricts l(2)gl activity to the oocyte posterior and is required for oocyte polarity formation. As to expression, expressed in the epithelial cells of the digestive tract and in gonads, in the ovary's nurse and oocyte's follicle cells.

Its subcellular location is the cell membrane. It localises to the secreted. It is found in the extracellular space. The protein resides in the extracellular matrix. Essential for the development of polarized epithelia, for cell polarity associated with asymmetric cell division of neuroblasts during development, and for oocyte polarity formation. Promotes the formation of actin-rich projections at the oocyte cortex and the posterior enrichment of par-1 which is required for oocyte polarization. Regulates the localization of axis-specifying morphogens such as stau and grk. Could act as a tumor suppressor. The protein is Lethal(2) giant larvae protein (l(2)gl) of Drosophila pseudoobscura pseudoobscura (Fruit fly).